Consider the following 342-residue polypeptide: Ribosomal RNA small subunit methyltransferase H (342 aa).

S-adenosyl-L-methionine is bound by residues 62–64, Asp82, Phe108, Asp129, and Gln136; that span reads GGH. The segment at 280–319 is disordered; the sequence is RHSKGQYPEDENLPMPPKRPRYFSKPKRVGPSKAEISHNP. Over residues 297-309 the composition is skewed to basic residues; that stretch reads KRPRYFSKPKRVG.

Belongs to the methyltransferase superfamily. RsmH family.

Its subcellular location is the cytoplasm. The catalysed reaction is cytidine(1402) in 16S rRNA + S-adenosyl-L-methionine = N(4)-methylcytidine(1402) in 16S rRNA + S-adenosyl-L-homocysteine + H(+). In terms of biological role, specifically methylates the N4 position of cytidine in position 1402 (C1402) of 16S rRNA. The chain is Ribosomal RNA small subunit methyltransferase H from Psychrobacter cryohalolentis (strain ATCC BAA-1226 / DSM 17306 / VKM B-2378 / K5).